We begin with the raw amino-acid sequence, 659 residues long: Anoctamin-10 (659 aa).

The Cytoplasmic segment spans residues 1 to 207; that stretch reads MRVTLSTLDT…DSIRSYFGET (207 aa). The helical transmembrane segment at 208–228 threads the bilayer; that stretch reads IALYFGFLEYFTFALIPMAII. Topologically, residues 229-240 are extracellular; the sequence is GLPYYLFVWEDY. Residues 241–261 form a helical membrane-spanning segment; that stretch reads DKYVIFASFNLIWSTVILEVW. Topologically, residues 262–316 are cytoplasmic; sequence KRGCANMTYRWGTLVMKRQFEEPRPGFHGVLGINSVTGREEPLYSSYKRQLRIYL. Residues 317-337 form a helical membrane-spanning segment; sequence VSLPFVCLCLYFSLYVMMIYF. Residues 338–352 lie on the Extracellular side of the membrane; that stretch reads DMEDWALSLHEDSGS. The chain crosses the membrane as a helical span at residues 353–373; it reads EWTSLLLYVPSIVYAVVIEIM. At 374-400 the chain is on the cytoplasmic side; that stretch reads NRLYRYAAEFLTSWENHRLESAYQNHL. The chain crosses the membrane as a helical span at residues 401-421; sequence VLKVLVFNFLNCFASLFYIAF. Over 422–500 the chain is Extracellular; it reads VLKDMKLLRQ…YLGTFDDYLE (79 aa). Residues 501–521 form a helical membrane-spanning segment; that stretch reads LFLQFGYVSLFSCVYPLAAAF. Residues 522 to 553 are Cytoplasmic-facing; that stretch reads AVLNNFTEVNSDALKMCRVFKRPFAEPSASIG. The helical transmembrane segment at 554–574 threads the bilayer; the sequence is VWQLAFETMSVISVVTNCALI. Over 575-590 the chain is Extracellular; it reads GMSPQVNAVFPESKTD. A helical membrane pass occupies residues 591-611; it reads LVLIVVAVEHALLALKFILAF. The Cytoplasmic portion of the chain corresponds to 612 to 659; it reads AIPDKPRHIQQKLARLEFESLEALKQQQMKLVAENLKEEYQEDGKEAT.

The protein belongs to the anoctamin family. In terms of tissue distribution, predominant expression seen in epithelial tissues.

It is found in the cell membrane. Does not exhibit calcium-activated chloride channel (CaCC) activity. Can inhibit the activity of ANO1. The sequence is that of Anoctamin-10 (Ano10) from Mus musculus (Mouse).